The sequence spans 271 residues: Putative phosphoenolpyruvate synthase regulatory protein (271 aa).

151–158 serves as a coordination point for ADP; it reads GVSRSGKT.

It belongs to the pyruvate, phosphate/water dikinase regulatory protein family. PSRP subfamily.

It carries out the reaction [pyruvate, water dikinase] + ADP = [pyruvate, water dikinase]-phosphate + AMP + H(+). It catalyses the reaction [pyruvate, water dikinase]-phosphate + phosphate + H(+) = [pyruvate, water dikinase] + diphosphate. Its function is as follows. Bifunctional serine/threonine kinase and phosphorylase involved in the regulation of the phosphoenolpyruvate synthase (PEPS) by catalyzing its phosphorylation/dephosphorylation. The polypeptide is Putative phosphoenolpyruvate synthase regulatory protein (Paraburkholderia phytofirmans (strain DSM 17436 / LMG 22146 / PsJN) (Burkholderia phytofirmans)).